The chain runs to 975 residues: Chromosome transmission fidelity protein 18 homolog (975 aa).

Disordered stretches follow at residues 30 to 83 (EGAS…KRQV) and 114 to 141 (SEEMEEPPPPDSSPTDITPPPSPEDLAE). Residue T51 is modified to Phosphothreonine. Low complexity predominate over residues 58–77 (RGDAASSPAPAASVGSSQGG). A Phosphoserine modification is found at S64. The segment covering 122 to 136 (PPDSSPTDITPPPSP) has biased composition (pro residues). S225 carries the post-translational modification Phosphoserine. Disordered regions lie at residues 246–276 (SDTLHSLRSGEEEAAQPLGAPEEEPTDGQDA) and 320–346 (RPSRKPRPSVEPARVSKEATAPGKWKS). An ATP-binding site is contributed by 374 to 381 (GPPGLGKT). Residues 858-896 (ASARVENSPQVDGSPPGLEGLLGGIGEKGVHRPAPRNHE) form a disordered region. Phosphoserine is present on S871.

It belongs to the activator 1 small subunits family. CTF18 subfamily. Component of the CTF18-RFC complex, which consists of CTF18, CTF8, DCC1, RFC2, RFC3, RFC4 and RFC5. During assembly of the CTF18-RFC complex, CTF18 may first assemble into a subcomplex with RFC2, RFC3, RFC4 and RFC5. CTF18 then interacts directly with CTF8, which in turn interacts with DCC1. The CTF18-RFC complex associates with PCNA and with DNA polymerase POLH. The CTF18-RFC complex does not interact with the Rad9/Rad1/Hus1 complex. CTF18 interacts with SMC1A and RAD21. Interacts with DDX11.

The protein localises to the nucleus. In terms of biological role, chromosome cohesion factor involved in sister chromatid cohesion and fidelity of chromosome transmission. Component of one of the cell nuclear antigen loader complexes, CTF18-replication factor C (CTF18-RFC), which consists of CTF18, CTF8, DCC1, RFC2, RFC3, RFC4 and RFC5. The CTF18-RFC complex binds to single-stranded and primed DNAs and has weak ATPase activity that is stimulated by the presence of primed DNA, replication protein A (RPA) and by proliferating cell nuclear antigen (PCNA). The CTF18-RFC complex catalyzes the ATP-dependent loading of PCNA onto primed and gapped DNA. Interacts with and stimulates DNA polymerase POLH. During DNA repair synthesis, involved in loading DNA polymerase POLE at the sites of local damage. This Homo sapiens (Human) protein is Chromosome transmission fidelity protein 18 homolog (CHTF18).